A 98-amino-acid chain; its full sequence is NADH-ubiquinone oxidoreductase chain 4L (98 aa).

A run of 3 helical transmembrane segments spans residues M1 to V21, S29 to L49, and I61 to V81.

This sequence belongs to the complex I subunit 4L family. In terms of assembly, core subunit of respiratory chain NADH dehydrogenase (Complex I) which is composed of 45 different subunits.

Its subcellular location is the mitochondrion inner membrane. It carries out the reaction a ubiquinone + NADH + 5 H(+)(in) = a ubiquinol + NAD(+) + 4 H(+)(out). Functionally, core subunit of the mitochondrial membrane respiratory chain NADH dehydrogenase (Complex I) which catalyzes electron transfer from NADH through the respiratory chain, using ubiquinone as an electron acceptor. Part of the enzyme membrane arm which is embedded in the lipid bilayer and involved in proton translocation. The polypeptide is NADH-ubiquinone oxidoreductase chain 4L (MT-ND4L) (Mephitis mephitis (Striped skunk)).